The primary structure comprises 147 residues: Proteinase inhibitor type-2 T (147 aa).

An N-terminal signal peptide occupies residues M1 to A25. Repeat copies occupy residues A25 to P82 and K83 to P142. 8 disulfide bridges follow: C28-C116, C32-C112, C40-C122, C52-C89, C55-C73, C56-C85, C62-C98, and C115-C133.

It belongs to the protease inhibitor I20 (potato type II proteinase inhibitor) family.

Its function is as follows. Inhibitor of trypsin and chymotrypsin. The sequence is that of Proteinase inhibitor type-2 T (PIN2T) from Solanum tuberosum (Potato).